We begin with the raw amino-acid sequence, 530 residues long: MPGKWISALLLLQISCCFRSVKCGKVLVWPMEFSHWMNIKIILDELVQRGHEVTVLRPSAYYVLDPKKSPGLKFETFPTSVSKDNLENFFIKFVDVWTYEMPRDTCLSYSPLLQNMIDEFSDYFLSLCKDVVSNKELMTKLQESKFDVLLSDPVASCGELIAELLQIPFLYSIRFSPGYQIEKSSGRFLLPPSYVPVILSGLGGQMTFIERIKNMICMLYFDFWFQMFNDKKWDSFYSEYLGRPTTLVETMGQAEMWLIRSNWDLEFPHPTLPNVDYVGGLHCKPAKPLPKDMEEFVQSSGDHGVVVFSLGSMVSNMTEEKANAIAWALAQIPQKVLWKFDGKTPATLGHNTRVYKWLPQNDLLGHPKTKAFVTHGGANGVYEAIYHGIPMIGIPLFGEQHDNIAHMVAKGAAVALNIRTMSKSDVLNALEEVIENPFYKKNAIWLSTIHHDQPMKPLDRAVFWIEFVMRHKRAKHLRPLGHNLTWYQYHSLDVIGFLLSCVATTIVLSVKCLLFIYRFFVKKENKMKNE.

The signal sequence occupies residues 1-23 (MPGKWISALLLLQISCCFRSVKC). Residues Asn316 and Asn483 are each glycosylated (N-linked (GlcNAc...) asparagine). A helical transmembrane segment spans residues 494 to 510 (VIGFLLSCVATTIVLSV).

It belongs to the UDP-glycosyltransferase family.

It localises to the endoplasmic reticulum membrane. The enzyme catalyses glucuronate acceptor + UDP-alpha-D-glucuronate = acceptor beta-D-glucuronoside + UDP + H(+). It catalyses the reaction 17alpha-estradiol + UDP-alpha-D-glucuronate = 17alpha-estradiol 3-O-(beta-D-glucuronate) + UDP + H(+). The catalysed reaction is 17alpha-estradiol + UDP-alpha-D-glucuronate = 17alpha-estradiol 17-O-(beta-D-glucuronate) + UDP + H(+). It carries out the reaction 17beta-estradiol + UDP-alpha-D-glucuronate = 17beta-estradiol 17-O-(beta-D-glucuronate) + UDP + H(+). The enzyme catalyses 17beta-hydroxy-5alpha-androstan-3-one + UDP-alpha-D-glucuronate = 5alpha-dihydrotestosterone 17-O-(beta-D-glucuronate) + UDP + H(+). It catalyses the reaction testosterone + UDP-alpha-D-glucuronate = testosterone 17-O-(beta-D-glucuronate) + UDP + H(+). Its function is as follows. UDP-glucuronosyltransferase (UGT) that catalyzes phase II biotransformation reactions in which lipophilic substrates are conjugated with glucuronic acid to increase the metabolite's water solubility, thereby facilitating excretion into either the urine or bile. Catalyzes the glucuronidation of endogenous steroid hormones such as androgens (epitestosterone, androsterone) and estrogens (estradiol, epiestradiol). The sequence is that of UDP-glucuronosyltransferase 2B17 from Mus musculus (Mouse).